The following is a 428-amino-acid chain: Diaminopimelate decarboxylase (428 aa).

Lys64 carries the post-translational modification N6-(pyridoxal phosphate)lysine. Residues Gly239 and Glu281–Arg284 contribute to the pyridoxal 5'-phosphate site. Arg284, Arg319, and Tyr323 together coordinate substrate. Cys350 serves as the catalytic Proton donor. Substrate-binding residues include Glu351 and Tyr379. Tyr379 provides a ligand contact to pyridoxal 5'-phosphate.

It belongs to the Orn/Lys/Arg decarboxylase class-II family. LysA subfamily. Homodimer. Requires pyridoxal 5'-phosphate as cofactor.

The enzyme catalyses meso-2,6-diaminopimelate + H(+) = L-lysine + CO2. The protein operates within amino-acid biosynthesis; L-lysine biosynthesis via DAP pathway; L-lysine from DL-2,6-diaminopimelate: step 1/1. Specifically catalyzes the decarboxylation of meso-diaminopimelate (meso-DAP) to L-lysine. This is Diaminopimelate decarboxylase from Methanothermobacter thermautotrophicus (strain ATCC 29096 / DSM 1053 / JCM 10044 / NBRC 100330 / Delta H) (Methanobacterium thermoautotrophicum).